The primary structure comprises 320 residues: Serpentine receptor class gamma-15 (320 aa).

Helical transmembrane passes span 29–49, 57–77, 85–105, 151–171, 197–217, 240–260, and 268–288; these read TISY…TILV, GSSF…IVFI, FLYV…SSLI, VSLV…IISP, LFQS…TSVT, IYIS…AFCT, and LFTA…VILF.

Belongs to the nematode receptor-like protein srg family.

The protein localises to the membrane. This is Serpentine receptor class gamma-15 (srg-15) from Caenorhabditis elegans.